A 512-amino-acid polypeptide reads, in one-letter code: Glutathione-binding protein GsiB (512 aa).

The N-terminal stretch at 1 to 26 (MTQFITHKWLAALGLASSIAAFPALA) is a signal peptide.

It belongs to the bacterial solute-binding protein 5 family. As to quaternary structure, the complex is composed of two ATP-binding proteins (GsiA), two transmembrane proteins (GsiC and GsiD) and a solute-binding protein (GsiB).

The protein resides in the periplasm. Functionally, part of the ABC transporter complex GsiABCD involved in glutathione import. Binds glutathione. This Salmonella typhimurium (strain LT2 / SGSC1412 / ATCC 700720) protein is Glutathione-binding protein GsiB.